The primary structure comprises 156 residues: 6,7-dimethyl-8-ribityllumazine synthase (156 aa).

Residues phenylalanine 23, 57 to 59 (AYE), and 81 to 83 (AII) each bind 5-amino-6-(D-ribitylamino)uracil. Position 86–87 (86–87 (GT)) interacts with (2S)-2-hydroxy-3-oxobutyl phosphate. The Proton donor role is filled by histidine 89. A 5-amino-6-(D-ribitylamino)uracil-binding site is contributed by phenylalanine 114. Arginine 128 contacts (2S)-2-hydroxy-3-oxobutyl phosphate.

This sequence belongs to the DMRL synthase family.

It catalyses the reaction (2S)-2-hydroxy-3-oxobutyl phosphate + 5-amino-6-(D-ribitylamino)uracil = 6,7-dimethyl-8-(1-D-ribityl)lumazine + phosphate + 2 H2O + H(+). Its pathway is cofactor biosynthesis; riboflavin biosynthesis; riboflavin from 2-hydroxy-3-oxobutyl phosphate and 5-amino-6-(D-ribitylamino)uracil: step 1/2. Functionally, catalyzes the formation of 6,7-dimethyl-8-ribityllumazine by condensation of 5-amino-6-(D-ribitylamino)uracil with 3,4-dihydroxy-2-butanone 4-phosphate. This is the penultimate step in the biosynthesis of riboflavin. In Helicobacter pylori (strain P12), this protein is 6,7-dimethyl-8-ribityllumazine synthase.